A 204-amino-acid polypeptide reads, in one-letter code: Urease accessory protein UreG (204 aa).

11 to 18 provides a ligand contact to GTP; sequence GPVGAGKT.

This sequence belongs to the SIMIBI class G3E GTPase family. UreG subfamily. Homodimer. UreD, UreF and UreG form a complex that acts as a GTP-hydrolysis-dependent molecular chaperone, activating the urease apoprotein by helping to assemble the nickel containing metallocenter of UreC. The UreE protein probably delivers the nickel.

The protein localises to the cytoplasm. Its function is as follows. Facilitates the functional incorporation of the urease nickel metallocenter. This process requires GTP hydrolysis, probably effectuated by UreG. The chain is Urease accessory protein UreG from Staphylococcus epidermidis (strain ATCC 35984 / DSM 28319 / BCRC 17069 / CCUG 31568 / BM 3577 / RP62A).